A 319-amino-acid chain; its full sequence is tRNA dimethylallyltransferase (319 aa).

Residue 11-18 (GPTCSGKS) participates in ATP binding. 13–18 (TCSGKS) contributes to the substrate binding site. Interaction with substrate tRNA stretches follow at residues 36–39 (DSMQ) and 160–164 (QRIAR).

This sequence belongs to the IPP transferase family. Monomer. Mg(2+) serves as cofactor.

The catalysed reaction is adenosine(37) in tRNA + dimethylallyl diphosphate = N(6)-dimethylallyladenosine(37) in tRNA + diphosphate. Functionally, catalyzes the transfer of a dimethylallyl group onto the adenine at position 37 in tRNAs that read codons beginning with uridine, leading to the formation of N6-(dimethylallyl)adenosine (i(6)A). The polypeptide is tRNA dimethylallyltransferase (Granulibacter bethesdensis (strain ATCC BAA-1260 / CGDNIH1)).